The chain runs to 268 residues: Ribosomal RNA small subunit methyltransferase A (268 aa).

Residues N18, L20, G45, E66, D91, and N112 each coordinate S-adenosyl-L-methionine.

This sequence belongs to the class I-like SAM-binding methyltransferase superfamily. rRNA adenine N(6)-methyltransferase family. RsmA subfamily.

The protein resides in the cytoplasm. It catalyses the reaction adenosine(1518)/adenosine(1519) in 16S rRNA + 4 S-adenosyl-L-methionine = N(6)-dimethyladenosine(1518)/N(6)-dimethyladenosine(1519) in 16S rRNA + 4 S-adenosyl-L-homocysteine + 4 H(+). Specifically dimethylates two adjacent adenosines (A1518 and A1519) in the loop of a conserved hairpin near the 3'-end of 16S rRNA in the 30S particle. May play a critical role in biogenesis of 30S subunits. This is Ribosomal RNA small subunit methyltransferase A from Pseudoalteromonas translucida (strain TAC 125).